The following is a 611-amino-acid chain: Leucine aminopeptidase (611 aa).

Substrate contacts are provided by residues 129 to 131 and 278 to 282; these read QCQ and GGMEN. His305 provides a ligand contact to Zn(2+). Glu306 (proton acceptor) is an active-site residue. Zn(2+)-binding residues include His309 and Glu328. Tyr393 (proton donor) is an active-site residue. 562–564 provides a ligand contact to substrate; the sequence is RMK.

Belongs to the peptidase M1 family. Requires Zn(2+) as cofactor.

Its subcellular location is the cytoplasm. The catalysed reaction is an epoxide + H2O = an ethanediol. In terms of biological role, aminopeptidase that preferentially cleaves di- and tripeptides. Also has low epoxide hydrolase activity (in vitro). Can hydrolyze the epoxide leukotriene LTA(4) but it forms preferentially 5,6-dihydroxy-7,9,11,14-eicosatetraenoic acid rather than the cytokine leukotriene B(4) as the product compared to the homologous mammalian enzyme (in vitro). In Oryza sativa subsp. japonica (Rice), this protein is Leucine aminopeptidase (LKHA4).